A 159-amino-acid chain; its full sequence is Cytochrome c-type biogenesis protein CcmE (159 aa).

Topologically, residues 1-8 are cytoplasmic; the sequence is MNLRRKNR. A helical; Signal-anchor for type II membrane protein transmembrane segment spans residues 9 to 29; that stretch reads LWVVCAVLAGLGLTTALVLYA. Over 30 to 159 the chain is Periplasmic; that stretch reads LRANIDLFYT…PQRADKDTSS (130 aa). A disordered region spans residues 129 to 159; the sequence is KHDENYTPPEVEKAMQENHRRPQRADKDTSS. 2 residues coordinate heme: histidine 130 and tyrosine 134.

This sequence belongs to the CcmE/CycJ family.

Its subcellular location is the cell inner membrane. Functionally, heme chaperone required for the biogenesis of c-type cytochromes. Transiently binds heme delivered by CcmC and transfers the heme to apo-cytochromes in a process facilitated by CcmF and CcmH. In Salmonella typhimurium (strain LT2 / SGSC1412 / ATCC 700720), this protein is Cytochrome c-type biogenesis protein CcmE.